We begin with the raw amino-acid sequence, 106 residues long: Iron-sulfur cluster assembly protein CyaY (106 aa).

It belongs to the frataxin family.

Its function is as follows. Involved in iron-sulfur (Fe-S) cluster assembly. May act as a regulator of Fe-S biogenesis. The protein is Iron-sulfur cluster assembly protein CyaY of Salmonella schwarzengrund (strain CVM19633).